Consider the following 433-residue polypeptide: Probable dipeptidase (433 aa).

The active site involves C20.

This sequence belongs to the peptidase C69 family.

It catalyses the reaction an L-aminoacyl-L-amino acid + H2O = 2 an L-alpha-amino acid. This chain is Probable dipeptidase (pipD), found in Salmonella dublin.